Consider the following 309-residue polypeptide: Ornithine carbamoyltransferase (309 aa).

Residues 56–59 (STRT), Gln-83, Arg-107, and 134–137 (HPCQ) each bind carbamoyl phosphate. L-ornithine contacts are provided by residues Asn-165, Asp-223, and 227-228 (SM). Residues 263–264 (CL) and Arg-291 contribute to the carbamoyl phosphate site.

The protein belongs to the aspartate/ornithine carbamoyltransferase superfamily. OTCase family.

The protein localises to the cytoplasm. It carries out the reaction carbamoyl phosphate + L-ornithine = L-citrulline + phosphate + H(+). Its pathway is amino-acid biosynthesis; L-arginine biosynthesis; L-arginine from L-ornithine and carbamoyl phosphate: step 1/3. Its function is as follows. Reversibly catalyzes the transfer of the carbamoyl group from carbamoyl phosphate (CP) to the N(epsilon) atom of ornithine (ORN) to produce L-citrulline. This chain is Ornithine carbamoyltransferase, found in Burkholderia mallei (strain ATCC 23344).